Consider the following 451-residue polypeptide: MNNPIAAIVLAAGKGTRMKSDLHKVLHPIAGRPMLLHLMASVDELSPAKKVVVVGDKADQLEAALSGTAELAVQEPQLGTGHAVRQAEAALSGFDGDVLILYGDVPFVPAATMRAMLDRLGASDAPAVVVLAFEPADPLQYGRVITDGDRVVKMVEHKDATDAERAVRLCNSGLMAARARDLFALLARVTDDNAAKEFYLVDIVNIANADGRLCAVVKTDPADVGGINSRAELAAAEAQWQAFRREEAMAAGASLRAPETVWFSWDTQLGRDVTIEPNVVFGPGVKIADGATIRAFSHIEGATIGAGCEVGPFARLRPGTVLGEKAKIGNFVEVKKAVLGAGAKANHLTYLGDATVGAGANIGAGTITCNYDGYFKHQTQIGERAFIGSNSALVAPVKIGADAIVAAGSTVTLDVGDGELRIVRGEQLVKPGWADRFHDAMRKKKAAEQKK.

The tract at residues 1 to 230 is pyrophosphorylase; it reads MNNPIAAIVL…PADVGGINSR (230 aa). UDP-N-acetyl-alpha-D-glucosamine-binding positions include 10–13, lysine 24, glutamine 74, 79–80, 102–104, glycine 142, glutamate 156, asparagine 171, and asparagine 228; these read LAAG, GT, and YGD. Aspartate 104 lines the Mg(2+) pocket. Residue asparagine 228 participates in Mg(2+) binding. The interval 231 to 251 is linker; sequence AELAAAEAQWQAFRREEAMAA. Positions 252 to 451 are N-acetyltransferase; the sequence is GASLRAPETV…RKKKAAEQKK (200 aa). 2 residues coordinate UDP-N-acetyl-alpha-D-glucosamine: arginine 317 and lysine 335. Histidine 347 functions as the Proton acceptor in the catalytic mechanism. The UDP-N-acetyl-alpha-D-glucosamine site is built by tyrosine 350 and asparagine 361. Acetyl-CoA-binding positions include alanine 364, 370–371, serine 389, alanine 407, and arginine 424; that span reads NY.

In the N-terminal section; belongs to the N-acetylglucosamine-1-phosphate uridyltransferase family. The protein in the C-terminal section; belongs to the transferase hexapeptide repeat family. Homotrimer. It depends on Mg(2+) as a cofactor.

The protein resides in the cytoplasm. It carries out the reaction alpha-D-glucosamine 1-phosphate + acetyl-CoA = N-acetyl-alpha-D-glucosamine 1-phosphate + CoA + H(+). It catalyses the reaction N-acetyl-alpha-D-glucosamine 1-phosphate + UTP + H(+) = UDP-N-acetyl-alpha-D-glucosamine + diphosphate. It functions in the pathway nucleotide-sugar biosynthesis; UDP-N-acetyl-alpha-D-glucosamine biosynthesis; N-acetyl-alpha-D-glucosamine 1-phosphate from alpha-D-glucosamine 6-phosphate (route II): step 2/2. It participates in nucleotide-sugar biosynthesis; UDP-N-acetyl-alpha-D-glucosamine biosynthesis; UDP-N-acetyl-alpha-D-glucosamine from N-acetyl-alpha-D-glucosamine 1-phosphate: step 1/1. The protein operates within bacterial outer membrane biogenesis; LPS lipid A biosynthesis. In terms of biological role, catalyzes the last two sequential reactions in the de novo biosynthetic pathway for UDP-N-acetylglucosamine (UDP-GlcNAc). The C-terminal domain catalyzes the transfer of acetyl group from acetyl coenzyme A to glucosamine-1-phosphate (GlcN-1-P) to produce N-acetylglucosamine-1-phosphate (GlcNAc-1-P), which is converted into UDP-GlcNAc by the transfer of uridine 5-monophosphate (from uridine 5-triphosphate), a reaction catalyzed by the N-terminal domain. In Sphingopyxis alaskensis (strain DSM 13593 / LMG 18877 / RB2256) (Sphingomonas alaskensis), this protein is Bifunctional protein GlmU.